The sequence spans 153 residues: Transcriptional repressor NrdR (153 aa).

Residues 3-34 (CPFCHNQDTRVIDSRAAEEGTAIRRRRSCPAC) fold into a zinc finger. The region spanning 46–136 (LMVTKRSGAT…VYRSFESLED (91 aa)) is the ATP-cone domain.

It belongs to the NrdR family. Zn(2+) serves as cofactor.

In terms of biological role, negatively regulates transcription of bacterial ribonucleotide reductase nrd genes and operons by binding to NrdR-boxes. This is Transcriptional repressor NrdR from Thermobifida fusca (strain YX).